The sequence spans 374 residues: UDP-N-acetylglucosamine--N-acetylmuramyl-(pentapeptide) pyrophosphoryl-undecaprenol N-acetylglucosamine transferase (374 aa).

Residues 13–15 (TGG), Asn-124, Arg-165, Ser-193, and Gln-294 contribute to the UDP-N-acetyl-alpha-D-glucosamine site.

The protein belongs to the glycosyltransferase 28 family. MurG subfamily.

The protein localises to the cell inner membrane. The enzyme catalyses di-trans,octa-cis-undecaprenyl diphospho-N-acetyl-alpha-D-muramoyl-L-alanyl-D-glutamyl-meso-2,6-diaminopimeloyl-D-alanyl-D-alanine + UDP-N-acetyl-alpha-D-glucosamine = di-trans,octa-cis-undecaprenyl diphospho-[N-acetyl-alpha-D-glucosaminyl-(1-&gt;4)]-N-acetyl-alpha-D-muramoyl-L-alanyl-D-glutamyl-meso-2,6-diaminopimeloyl-D-alanyl-D-alanine + UDP + H(+). Its pathway is cell wall biogenesis; peptidoglycan biosynthesis. Its function is as follows. Cell wall formation. Catalyzes the transfer of a GlcNAc subunit on undecaprenyl-pyrophosphoryl-MurNAc-pentapeptide (lipid intermediate I) to form undecaprenyl-pyrophosphoryl-MurNAc-(pentapeptide)GlcNAc (lipid intermediate II). This is UDP-N-acetylglucosamine--N-acetylmuramyl-(pentapeptide) pyrophosphoryl-undecaprenol N-acetylglucosamine transferase from Sinorhizobium medicae (strain WSM419) (Ensifer medicae).